Here is a 162-residue protein sequence, read N- to C-terminus: Peptide deformylase-like (162 aa).

The protein belongs to the polypeptide deformylase family.

This is Peptide deformylase-like from Staphylococcus aureus (strain MRSA252).